A 357-amino-acid chain; its full sequence is uncharacterized protein (357 aa).

The PNPLA domain maps to 27-196 (LVCEGGGQRG…SDAIPVKEAA (170 aa)). The short motif at 31–36 (GGGQRG) is the GXGXXG element. Residues 59-63 (GTSAG) carry the GXSXG motif. Ser-61 (nucleophile) is an active-site residue. The active-site Proton acceptor is Asp-183. The short motif at 183–185 (DGG) is the DGA/G element.

Functionally, probable lipid hydrolase. This is an uncharacterized protein from Escherichia coli (strain K12).